The chain runs to 188 residues: Augmin complex subunit dgt4 (188 aa).

Residues 141 to 163 adopt a coiled-coil conformation; it reads QREFAQNQEALRSLRTAVDGLEN.

As to quaternary structure, component of the augmin complex composed of dgt2, dgt3, dgt4, dgt5, dgt6, msd1, msd5 and wac. The complex interacts directly or indirectly with microtubules and is required for centrosome-independent generation of spindle microtubules.

The protein resides in the cytoplasm. It localises to the cytoskeleton. It is found in the spindle. Its function is as follows. As part of the augmin complex, plays a role in centrosome-independent generation of spindle microtubules. The complex is required for mitotic spindle assembly through its involvement in localizing gamma-tubulin to spindle microtubules. This is Augmin complex subunit dgt4 from Drosophila melanogaster (Fruit fly).